Reading from the N-terminus, the 111-residue chain is Propane 2-monooxygenase, effector component (111 aa).

This sequence belongs to the TmoD/XamoD family. The propane 2-monooxygenase multicomponent enzyme system is composed of an electron transfer component and a monooxygenase component interacting with the effector protein PrmD. The electron transfer component is composed of a reductase (PrmB), and the monooxygenase component is formed by a large subunit (PrmA) and a small subunit (PrmC).

In terms of biological role, effector component of the propane 2-monooxygenase multicomponent enzyme system which is involved in the degradation of propane via the O2-dependent hydroxylation of propane. The polypeptide is Propane 2-monooxygenase, effector component (Gordonia sp. (strain TY-5)).